Here is a 155-residue protein sequence, read N- to C-terminus: 3-hydroxyacyl-[acyl-carrier-protein] dehydratase FabZ (155 aa).

Histidine 58 is a catalytic residue.

Belongs to the thioester dehydratase family. FabZ subfamily.

It is found in the cytoplasm. It carries out the reaction a (3R)-hydroxyacyl-[ACP] = a (2E)-enoyl-[ACP] + H2O. Its function is as follows. Involved in unsaturated fatty acids biosynthesis. Catalyzes the dehydration of short chain beta-hydroxyacyl-ACPs and long chain saturated and unsaturated beta-hydroxyacyl-ACPs. This Alkalilimnicola ehrlichii (strain ATCC BAA-1101 / DSM 17681 / MLHE-1) protein is 3-hydroxyacyl-[acyl-carrier-protein] dehydratase FabZ.